The following is a 62-amino-acid chain: U8-theraphotoxin-Cg1a 2 (62 aa).

Residues M1–A21 form the signal peptide. Positions T22–R29 are excised as a propeptide. Disulfide bonds link C31–C46, C38–C51, and C45–C58.

Belongs to the neurotoxin 10 (Hwtx-1) family. 30 (Jztx-14) subfamily. Expressed by the venom gland.

The protein localises to the secreted. Its function is as follows. Probable ion channel inhibitor. This Chilobrachys guangxiensis (Chinese earth tiger tarantula) protein is U8-theraphotoxin-Cg1a 2.